A 565-amino-acid chain; its full sequence is Proline--tRNA ligase (565 aa).

This sequence belongs to the class-II aminoacyl-tRNA synthetase family. ProS type 1 subfamily. Homodimer.

The protein localises to the cytoplasm. It catalyses the reaction tRNA(Pro) + L-proline + ATP = L-prolyl-tRNA(Pro) + AMP + diphosphate. Its function is as follows. Catalyzes the attachment of proline to tRNA(Pro) in a two-step reaction: proline is first activated by ATP to form Pro-AMP and then transferred to the acceptor end of tRNA(Pro). As ProRS can inadvertently accommodate and process non-cognate amino acids such as alanine and cysteine, to avoid such errors it has two additional distinct editing activities against alanine. One activity is designated as 'pretransfer' editing and involves the tRNA(Pro)-independent hydrolysis of activated Ala-AMP. The other activity is designated 'posttransfer' editing and involves deacylation of mischarged Ala-tRNA(Pro). The misacylated Cys-tRNA(Pro) is not edited by ProRS. This chain is Proline--tRNA ligase, found in Hydrogenobaculum sp. (strain Y04AAS1).